Consider the following 357-residue polypeptide: Probable dual-specificity RNA methyltransferase RlmN (357 aa).

Catalysis depends on E92, which acts as the Proton acceptor. Residues 98–336 (HKYGLSVCVT…CGVRLEHGTD (239 aa)) form the Radical SAM core domain. C105 and C341 form a disulfide bridge. [4Fe-4S] cluster contacts are provided by C112, C116, and C119. Residues 164 to 165 (GE), S196, 219 to 221 (SLH), and N297 each bind S-adenosyl-L-methionine. The active-site S-methylcysteine intermediate is the C341.

The protein belongs to the radical SAM superfamily. RlmN family. It depends on [4Fe-4S] cluster as a cofactor.

It is found in the cytoplasm. The catalysed reaction is adenosine(2503) in 23S rRNA + 2 reduced [2Fe-2S]-[ferredoxin] + 2 S-adenosyl-L-methionine = 2-methyladenosine(2503) in 23S rRNA + 5'-deoxyadenosine + L-methionine + 2 oxidized [2Fe-2S]-[ferredoxin] + S-adenosyl-L-homocysteine. It catalyses the reaction adenosine(37) in tRNA + 2 reduced [2Fe-2S]-[ferredoxin] + 2 S-adenosyl-L-methionine = 2-methyladenosine(37) in tRNA + 5'-deoxyadenosine + L-methionine + 2 oxidized [2Fe-2S]-[ferredoxin] + S-adenosyl-L-homocysteine. Specifically methylates position 2 of adenine 2503 in 23S rRNA and position 2 of adenine 37 in tRNAs. This Exiguobacterium sibiricum (strain DSM 17290 / CCUG 55495 / CIP 109462 / JCM 13490 / 255-15) protein is Probable dual-specificity RNA methyltransferase RlmN.